We begin with the raw amino-acid sequence, 401 residues long: Homeobox protein engrailed-1 (401 aa).

4 disordered regions span residues 1 to 102 (MEEQ…PAAQ), 138 to 167 (GGGAAAGGGSRVERDRGQTGAGRDPVHSLG), 229 to 253 (SKPSDSGGGSGGNAGSPGAQGAKFP), and 293 to 315 (RPSSGPRTRKLKKKKNEKEDKRP). Residues 13-48 (DSGLGAVAAAAPSGLSLSLSPGASGSSGSDGDSVPV) show a composition bias toward low complexity. Composition is skewed to pro residues over residues 49 to 64 (SPQPAPPSPPAAPCLP) and 73 to 88 (PPHPPPPPPPPPPPPQ). The span at 89–102 (HLAAPAHQPQPAAQ) shows a compositional bias: low complexity. Composition is skewed to gly residues over residues 138–147 (GGGAAAGGGS) and 234–243 (SGGGSGGNAG). Residues 312–371 (DKRPRTAFTAEQLQRLKAEFQANRYITEQRRQTLAQELSLNESQIKIWFQNKRAKIKKAT) constitute a DNA-binding region (homeobox).

Belongs to the engrailed homeobox family.

It is found in the nucleus. In terms of biological role, required for proper formation of the apical ectodermal ridge and correct dorsal-ventral patterning in the limb. The chain is Homeobox protein engrailed-1 (En1) from Mus musculus (Mouse).